The sequence spans 450 residues: Grayanic acid biosynthesis cluster O-methyltransferase (450 aa).

Asp254 is a binding site for S-adenosyl-L-methionine. Catalysis depends on His301, which acts as the Proton acceptor.

The protein belongs to the class I-like SAM-binding methyltransferase superfamily. Cation-independent O-methyltransferase family. COMT subfamily.

The protein operates within secondary metabolite biosynthesis. In terms of biological role, non-reducing polyketide synthase; part of the gene cluster that mediates the biosynthesis of orcinol depsidone grayanic acid (GRA), the only major secondary metabolite known in C.grayi. The first step consists in the ring and depside synthesis by PKS16 leading to 4-O-demethylsphaerophorin, involving different orcinol-like rings, one with acetyl CoA and the other with octanoyl CoA as the starter. Further depsidone formation by the GRA cluster-specific cytochrome P450 leads to 4-O-demethylgrayanic acid. Finally, the cluster specific O-methyltransferase probably converts the 4-O-demethylgrayanic acid into grayanic acid. This is Grayanic acid biosynthesis cluster O-methyltransferase from Cladonia grayi (Gray's cup lichen).